Reading from the N-terminus, the 489-residue chain is COX3 mRNA-specific translational activator PET494 (489 aa).

Its subcellular location is the mitochondrion inner membrane. Functionally, required for the expression of the mitochondrial gene for cytochrome c oxidase subunit III (COX3). This Saccharomyces cerevisiae (strain ATCC 204508 / S288c) (Baker's yeast) protein is COX3 mRNA-specific translational activator PET494 (PET494).